A 625-amino-acid polypeptide reads, in one-letter code: Probable potassium transport system protein Kup 2 (625 aa).

12 helical membrane passes run Leu15–Phe35, Ile52–Val72, Gly98–Leu118, Leu134–Phe154, Ile164–Phe184, Phe212–Ala232, Trp246–Leu266, Phe284–Ile304, Val336–Phe356, Ala365–Ala385, Phe394–Ile414, and Leu417–Thr437.

It belongs to the HAK/KUP transporter (TC 2.A.72) family.

The protein localises to the cell inner membrane. It catalyses the reaction K(+)(in) + H(+)(in) = K(+)(out) + H(+)(out). Transport of potassium into the cell. Likely operates as a K(+):H(+) symporter. The sequence is that of Probable potassium transport system protein Kup 2 from Legionella pneumophila (strain Paris).